Consider the following 243-residue polypeptide: 2,3-bisphosphoglycerate-dependent phosphoglycerate mutase (243 aa).

Residues 8-15, 21-22, Arg-60, 87-90, Lys-98, 114-115, and 183-184 each bind substrate; these read RHGQSEWN, TG, ERHY, RR, and GN. The Tele-phosphohistidine intermediate role is filled by His-9. The Proton donor/acceptor role is filled by Glu-87.

It belongs to the phosphoglycerate mutase family. BPG-dependent PGAM subfamily. In terms of assembly, homodimer.

It carries out the reaction (2R)-2-phosphoglycerate = (2R)-3-phosphoglycerate. The protein operates within carbohydrate degradation; glycolysis; pyruvate from D-glyceraldehyde 3-phosphate: step 3/5. Functionally, catalyzes the interconversion of 2-phosphoglycerate and 3-phosphoglycerate. The protein is 2,3-bisphosphoglycerate-dependent phosphoglycerate mutase of Maricaulis maris (strain MCS10) (Caulobacter maris).